A 296-amino-acid chain; its full sequence is NADH-ubiquinone oxidoreductase chain 2 (296 aa).

8 consecutive transmembrane segments (helical) span residues 5-25, 49-69, 71-91, 114-134, 167-187, 209-229, 242-262, and 276-296; these read LCLF…GLWL, YFLI…NQSF, FLIP…MWLV, LLGL…SAFI, FFLM…AVIL, ASIS…GFFI, LLVL…FSIA, and KMEI…LFFL.

The protein belongs to the complex I subunit 2 family.

Its subcellular location is the mitochondrion inner membrane. The catalysed reaction is a ubiquinone + NADH + 5 H(+)(in) = a ubiquinol + NAD(+) + 4 H(+)(out). Core subunit of the mitochondrial membrane respiratory chain NADH dehydrogenase (Complex I) that is believed to belong to the minimal assembly required for catalysis. Complex I functions in the transfer of electrons from NADH to the respiratory chain. The immediate electron acceptor for the enzyme is believed to be ubiquinone. The chain is NADH-ubiquinone oxidoreductase chain 2 (ND2) from Artemia franciscana (Brine shrimp).